The sequence spans 379 residues: MVLQKLGDAQRILVFGDSTIENKLPVIRALWEASESHPLLKAFLQQAVEIIQEETQKLASHEGSLFLHCIDVLEVAEVYAEADEPDELIASVLALVARFGALVLDLERDDSNKRSVGPVSILGFCTGLLAGAVAACAEDMIKVFDLACEVLAISFRLVVALVRRSKAIEPNAGLWATTFIRISKEELEMQLDDYNLHHGLSQDKKAYIGVSSQSWNSVFAPPSVILHIARQCPILSQISQVPTTAAMAVHASHLSRPDVNWILGSLPGLETPVLPDRLIVSTSTGKPFLAKTLRELIQSIIADISMNILDIDGTIHGICSGLDMTKPVVISAMGPSPNIPALTRRLASGGVQLKTFAVIAGDRPRRVVPRRPSSSGYSS.

Helical transmembrane passes span 87–107 (ELIA…LDLE), 116–136 (VGPV…VAAC), and 141–161 (IKVF…VVAL).

It localises to the membrane. It participates in mycotoxin biosynthesis. In terms of biological role, part of the gene cluster that mediates the biosynthesis of the selective antifungal agent ascochitine, an o-quinone methide that plays a possible protective role against other microbial competitors in nature and is considered to be important for pathogenicity of legume-associated Didymella species. The pathway probably begins with the synthesis of a keto-aldehyde intermediate by the ascochitine non-reducing polyketide synthase pksAC from successive condensations of 4 malonyl-CoA units, presumably with a simple acetyl-CoA starter unit. Release of the keto-aldehyde intermediate is consistent with the presence of the C-terminal reductive release domain. The HR-PKS (orf7) probably makes a diketide starter unit which is passed to the non-reducing polyketide synthase pksAC for further extension, producing ascochital and ascochitine. The aldehyde dehydrogenase (orf1), the 2-oxoglutarate-dependent dioxygenase (orf3) and the dehydrogenase (orf9) are probably involved in subsequent oxidations of methyl groups to the carboxylic acid of the heterocyclic ring. The ascochitine gene cluster also includes a gene encoding a short peptide with a cupin domain (orf2) that is often found in secondary metabolite gene clusters and which function has still to be determined. The protein is Ascochitine biosynthesis cluster protein 8 of Didymella fabae (Leaf and pod spot disease fungus).